Here is a 101-residue protein sequence, read N- to C-terminus: Chaperone modulatory protein CbpM (101 aa).

It belongs to the CbpM family.

Functionally, interacts with CbpA and inhibits both the DnaJ-like co-chaperone activity and the DNA binding activity of CbpA. Together with CbpA, modulates the activity of the DnaK chaperone system. Does not inhibit the co-chaperone activity of DnaJ. The protein is Chaperone modulatory protein CbpM of Pseudomonas entomophila (strain L48).